The following is a 250-amino-acid chain: Small ribosomal subunit protein uS3 (250 aa).

A KH type-2 domain is found at valine 39–aspartate 107. Residues methionine 215–glutamate 250 are disordered. Residues alanine 220–glutamate 250 are compositionally biased toward basic and acidic residues.

It belongs to the universal ribosomal protein uS3 family. As to quaternary structure, part of the 30S ribosomal subunit. Forms a tight complex with proteins S10 and S14.

In terms of biological role, binds the lower part of the 30S subunit head. Binds mRNA in the 70S ribosome, positioning it for translation. The chain is Small ribosomal subunit protein uS3 from Acinetobacter baumannii (strain AB0057).